The following is a 308-amino-acid chain: 2-dehydro-3-deoxy-phosphogluconate/2-dehydro-3-deoxy-6-phosphogalactonate aldolase (308 aa).

Residues 57–58, 144–146, and 169–171 contribute to the substrate site; these read TT, YNY, and KDT. The Schiff-base intermediate with substrate role is filled by K169.

It belongs to the DapA family. KDPG aldolase subfamily. As to quaternary structure, homotetramer; dimer of dimers.

It carries out the reaction 2-dehydro-3-deoxy-6-phospho-D-gluconate = D-glyceraldehyde 3-phosphate + pyruvate. It catalyses the reaction 2-dehydro-3-deoxy-6-phospho-D-galactonate = D-glyceraldehyde 3-phosphate + pyruvate. The protein operates within carbohydrate acid metabolism; 2-dehydro-3-deoxy-D-gluconate degradation; D-glyceraldehyde 3-phosphate and pyruvate from 2-dehydro-3-deoxy-D-gluconate: step 2/2. Its function is as follows. Involved in the degradation of glucose and galactose via the Entner-Doudoroff pathway. Catalyzes the reversible cleavage of 2-keto-3-deoxy-6-phosphogluconate (KDPG) and 2-keto-3-deoxygluconate (KDG) forming pyruvate and glyceraldehyde 3-phosphate or glyceraldehyde, respectively. It is also able to catalyze the reversible cleavage of 2-keto-3-deoxy-6-phosphogalactonate (KDPGal) and 2-keto-3-deoxygalactonate (KDGal). The protein is 2-dehydro-3-deoxy-phosphogluconate/2-dehydro-3-deoxy-6-phosphogalactonate aldolase (eda) of Saccharolobus solfataricus (strain ATCC 35092 / DSM 1617 / JCM 11322 / P2) (Sulfolobus solfataricus).